Reading from the N-terminus, the 474-residue chain is Lysosomal protective protein (474 aa).

Positions 1 to 23 (MPGTALSPLLLLLLLSWASRNEA) are cleaved as a signal peptide. 4 disulfides stabilise this stretch: Cys-83/Cys-356, Cys-235/Cys-251, Cys-236/Cys-241, and Cys-276/Cys-325. Asn-140 is a glycosylation site (N-linked (GlcNAc...) (high mannose) asparagine). Ser-173 is an active-site residue. Asn-327 is a glycosylation site (N-linked (GlcNAc...) (high mannose) asparagine). Active-site residues include Asp-394 and His-451.

Belongs to the peptidase S10 family. Heterodimer of a 32 kDa chain and a 20 kDa chain; disulfide-linked.

It is found in the lysosome. The enzyme catalyses Release of a C-terminal amino acid with broad specificity.. Functionally, protective protein appears to be essential for both the activity of beta-galactosidase and neuraminidase, it associates with these enzymes and exerts a protective function necessary for their stability and activity. This protein is also a carboxypeptidase and can deamidate tachykinins. The polypeptide is Lysosomal protective protein (Ctsa) (Mus musculus (Mouse)).